The chain runs to 338 residues: Glyceraldehyde-3-phosphate dehydrogenase (338 aa).

NAD(+) is bound by residues 12–13 (RI), Asp34, and Arg79. D-glyceraldehyde 3-phosphate is bound by residues 150–152 (SCT), Thr181, 210–211 (TG), and Arg233. The active-site Nucleophile is Cys151. Asn316 serves as a coordination point for NAD(+).

The protein belongs to the glyceraldehyde-3-phosphate dehydrogenase family. Homotetramer.

The protein localises to the cytoplasm. The catalysed reaction is D-glyceraldehyde 3-phosphate + phosphate + NAD(+) = (2R)-3-phospho-glyceroyl phosphate + NADH + H(+). It functions in the pathway carbohydrate degradation; glycolysis; pyruvate from D-glyceraldehyde 3-phosphate: step 1/5. The polypeptide is Glyceraldehyde-3-phosphate dehydrogenase (GPD) (Phaffia rhodozyma (Yeast)).